The following is a 399-amino-acid chain: Enoyl-[acyl-carrier-protein] reductase [NADH] (399 aa).

NAD(+)-binding positions include 48 to 53 (GASTGY), 74 to 75 (FE), 111 to 112 (DA), and 139 to 140 (LA). Position 225 (tyrosine 225) interacts with substrate. The Proton donor role is filled by tyrosine 235. NAD(+) is bound by residues lysine 244 and 274–276 (VVT).

This sequence belongs to the TER reductase family. In terms of assembly, monomer.

It catalyses the reaction a 2,3-saturated acyl-[ACP] + NAD(+) = a (2E)-enoyl-[ACP] + NADH + H(+). It functions in the pathway lipid metabolism; fatty acid biosynthesis. Functionally, involved in the final reduction of the elongation cycle of fatty acid synthesis (FAS II). Catalyzes the reduction of a carbon-carbon double bond in an enoyl moiety that is covalently linked to an acyl carrier protein (ACP). This is Enoyl-[acyl-carrier-protein] reductase [NADH] from Erwinia tasmaniensis (strain DSM 17950 / CFBP 7177 / CIP 109463 / NCPPB 4357 / Et1/99).